The sequence spans 600 residues: Methionine--tRNA ligase (600 aa).

Residues proline 12–histidine 22 carry the 'HIGH' region motif. Positions 144, 147, 157, and 160 each coordinate Zn(2+). Positions lysine 351–serine 355 match the 'KMSKS' region motif. Serine 354 is an ATP binding site.

This sequence belongs to the class-I aminoacyl-tRNA synthetase family. MetG type 1 subfamily. As to quaternary structure, monomer. Requires Zn(2+) as cofactor.

It is found in the cytoplasm. The catalysed reaction is tRNA(Met) + L-methionine + ATP = L-methionyl-tRNA(Met) + AMP + diphosphate. Functionally, is required not only for elongation of protein synthesis but also for the initiation of all mRNA translation through initiator tRNA(fMet) aminoacylation. The chain is Methionine--tRNA ligase from Chloroflexus aggregans (strain MD-66 / DSM 9485).